A 112-amino-acid polypeptide reads, in one-letter code: UPF0212 protein Mpal_1084 (112 aa).

This sequence belongs to the UPF0212 family.

This Methanosphaerula palustris (strain ATCC BAA-1556 / DSM 19958 / E1-9c) protein is UPF0212 protein Mpal_1084.